The sequence spans 273 residues: Large ribosomal subunit protein uL2c (273 aa).

Disordered stretches follow at residues 30 to 55 (EKKLTRGWSRAQGRNNKGRITTRHRG) and 222 to 243 (GSAMNPVDHPHGGGEGKAPIGR). Basic residues predominate over residues 45–55 (NKGRITTRHRG).

This sequence belongs to the universal ribosomal protein uL2 family. Part of the 50S ribosomal subunit.

The protein resides in the plastid. In Prototheca wickerhamii, this protein is Large ribosomal subunit protein uL2c (rpl2).